Here is a 371-residue protein sequence, read N- to C-terminus: 4-hydroxy-3-methylbut-2-en-1-yl diphosphate synthase (flavodoxin) (371 aa).

Cys270, Cys273, Cys305, and Glu312 together coordinate [4Fe-4S] cluster.

Belongs to the IspG family. Requires [4Fe-4S] cluster as cofactor.

The enzyme catalyses (2E)-4-hydroxy-3-methylbut-2-enyl diphosphate + oxidized [flavodoxin] + H2O + 2 H(+) = 2-C-methyl-D-erythritol 2,4-cyclic diphosphate + reduced [flavodoxin]. The protein operates within isoprenoid biosynthesis; isopentenyl diphosphate biosynthesis via DXP pathway; isopentenyl diphosphate from 1-deoxy-D-xylulose 5-phosphate: step 5/6. Its function is as follows. Converts 2C-methyl-D-erythritol 2,4-cyclodiphosphate (ME-2,4cPP) into 1-hydroxy-2-methyl-2-(E)-butenyl 4-diphosphate. This Shewanella halifaxensis (strain HAW-EB4) protein is 4-hydroxy-3-methylbut-2-en-1-yl diphosphate synthase (flavodoxin).